The chain runs to 277 residues: Elongation factor Ts (277 aa).

Residues T79–V82 form an involved in Mg(2+) ion dislocation from EF-Tu region.

Belongs to the EF-Ts family.

The protein localises to the cytoplasm. Associates with the EF-Tu.GDP complex and induces the exchange of GDP to GTP. It remains bound to the aminoacyl-tRNA.EF-Tu.GTP complex up to the GTP hydrolysis stage on the ribosome. The protein is Elongation factor Ts of Phytoplasma australiense.